Here is a 131-residue protein sequence, read N- to C-terminus: Holo-[acyl-carrier-protein] synthase (131 aa).

Mg(2+)-binding residues include aspartate 8 and glutamate 59.

The protein belongs to the P-Pant transferase superfamily. AcpS family. Mg(2+) is required as a cofactor.

It is found in the cytoplasm. The catalysed reaction is apo-[ACP] + CoA = holo-[ACP] + adenosine 3',5'-bisphosphate + H(+). In terms of biological role, transfers the 4'-phosphopantetheine moiety from coenzyme A to a Ser of acyl-carrier-protein. The polypeptide is Holo-[acyl-carrier-protein] synthase (Orientia tsutsugamushi (strain Ikeda) (Rickettsia tsutsugamushi)).